A 1308-amino-acid chain; its full sequence is Misshapen-like kinase 1 (1308 aa).

One can recognise a Protein kinase domain in the interval 25–289 (FELVEVVGNG…TEQLLKFPFI (265 aa)). ATP contacts are provided by residues 31 to 39 (VGNGTYGQV) and lysine 54. The Proton acceptor role is filled by aspartate 153. 3 disordered regions span residues 299 to 347 (RIQL…NVPG), 363 to 383 (KSNSEALKQQQQLQQQQQRDP), and 395 to 862 (QRRI…GGTM). Residues 317 to 333 (EETEYEYSGSEEEDDSH) are compositionally biased toward acidic residues. 2 positions are modified to phosphoserine: serine 324 and serine 326. The segment covering 371–380 (QQQQLQQQQQ) has biased composition (low complexity). The segment covering 396 to 466 (RRIEEQKEER…EEQRQSERLQ (71 aa)) has biased composition (basic and acidic residues). Residues 479–497 (LQQQQQQQQLQKQQQQQQQ) show a composition bias toward low complexity. 2 positions are modified to omega-N-methylarginine: arginine 503 and arginine 511. A compositionally biased stretch (basic and acidic residues) spans 520-530 (AWAREVEERAR). The span at 600–610 (RSQSLQDQPTR) shows a compositional bias: polar residues. Positions 623 to 633 (PAAVPTPTATP) are enriched in low complexity. Serine 644 is modified (phosphoserine). A compositionally biased stretch (polar residues) spans 673-685 (QRTSSIATALNTS). 6 positions are modified to phosphoserine: aspartate 702, serine 720, serine 729, serine 745, serine 746, and serine 750. Basic and acidic residues predominate over residues 702–714 (DLRRSDPGWERSD). Positions 773–797 (AIGEDFVLLKERTLDEAPKPPKKAM) are enriched in basic and acidic residues. Acidic residues predominate over residues 804–820 (EEVESSEEEEEEGDGEP). The tract at residues 842–1308 (MVVHDVEEIS…TLNRNCIMNW (467 aa)) is mediates interaction with RAP2A. Position 867 is a phosphothreonine (threonine 867). Residues 881–918 (GYTNLPDVVQPSHSPTENSKGQSPPTKDGGSDYQSRGL) are disordered. Polar residues predominate over residues 891–905 (PSHSPTENSKGQSPP). The CNH domain maps to 995-1282 (NSEILCAALW…KFLCERNDKV (288 aa)).

It belongs to the protein kinase superfamily. STE Ser/Thr protein kinase family. STE20 subfamily. As to quaternary structure, interacts with RAP2A and TANC1. Interacts with NCK1. The cofactor is Mg(2+). Autophosphorylated. Appears to be ubiquitous, expressed in all tissue types examined. Highly expressed in the brain, moderately expressed in kidney and spleen, low levels present in heart and skeletal muscle. Isoform 2 is more abundant in the brain than isoform 1.

It is found in the cytoplasm. Its subcellular location is the postsynaptic density. It localises to the cell projection. The protein resides in the axon. The protein localises to the dendrite. It catalyses the reaction L-seryl-[protein] + ATP = O-phospho-L-seryl-[protein] + ADP + H(+). The catalysed reaction is L-threonyl-[protein] + ATP = O-phospho-L-threonyl-[protein] + ADP + H(+). Functionally, serine/threonine kinase which acts as a negative regulator of Ras-related Rap2-mediated signal transduction to control neuronal structure and AMPA receptor trafficking. Required for normal synaptic density, dendrite complexity, as well as surface AMPA receptor expression in hippocampal neurons. Can activate the JNK and MAPK14/p38 pathways and mediates stimulation of the stress-activated protein kinase MAPK14/p38 MAPK downstream of the Raf/ERK pathway. Phosphorylates TANC1 upon stimulation by RAP2A, MBP and SMAD1. Has an essential function in negative selection of thymocytes, perhaps by coupling NCK1 to activation of JNK1. Activator of the Hippo signaling pathway which plays a pivotal role in organ size control and tumor suppression by restricting proliferation and promoting apoptosis. MAP4Ks act in parallel to and are partially redundant with STK3/MST2 and STK4/MST2 in the phosphorylation and activation of LATS1/2, and establish MAP4Ks as components of the expanded Hippo pathway. This is Misshapen-like kinase 1 from Mus musculus (Mouse).